The chain runs to 132 residues: Large-conductance mechanosensitive channel (132 aa).

2 helical membrane-spanning segments follow: residues 11–31 (FISR…GAFG) and 75–95 (GSFL…FLLV).

Belongs to the MscL family. Homopentamer.

It is found in the cell inner membrane. Channel that opens in response to stretch forces in the membrane lipid bilayer. May participate in the regulation of osmotic pressure changes within the cell. The polypeptide is Large-conductance mechanosensitive channel (Synechococcus sp. (strain JA-3-3Ab) (Cyanobacteria bacterium Yellowstone A-Prime)).